The chain runs to 248 residues: 14-3-3-like protein G-BOX factor 14 kappa (248 aa).

Serine 70, serine 112, and serine 193 each carry phosphoserine. Threonine 214 carries the phosphothreonine modification.

It belongs to the 14-3-3 family. In terms of assembly, interacts with the isocitrate dehydrogenase IDH3, and malate dehydrogenases MDH1 and MDH2. Interacts with CINV1.

The protein localises to the nucleus. It is found in the cytoplasm. In terms of biological role, is associated with a DNA binding complex that binds to the G box, a well-characterized cis-acting DNA regulatory element found in plant genes. Involved in the regulation of nutrient metabolism. Negative regulator of freezing tolerance that modulates cold-responsive C-repeat-binding factors (CBF) DREB1A AND DREB1B proteins stability by facilitating their ubiquitin-mediated degradation; this processus is counteracted by B1L. This is 14-3-3-like protein G-BOX factor 14 kappa from Arabidopsis thaliana (Mouse-ear cress).